The chain runs to 558 residues: Arginine--tRNA ligase (558 aa).

The 'HIGH' region motif lies at 129–139 (ANPTGPLHVGH).

The protein belongs to the class-I aminoacyl-tRNA synthetase family. Monomer.

Its subcellular location is the cytoplasm. The enzyme catalyses tRNA(Arg) + L-arginine + ATP = L-arginyl-tRNA(Arg) + AMP + diphosphate. This Polaromonas naphthalenivorans (strain CJ2) protein is Arginine--tRNA ligase.